We begin with the raw amino-acid sequence, 316 residues long: PAK4-inhibitor inka2 (316 aa).

Disordered stretches follow at residues 43–74 (RSSP…SHRT) and 108–130 (YSEV…ESET). The segment covering 65 to 74 (RRDNRISHRT) has biased composition (basic and acidic residues). Acidic residues predominate over residues 119 to 129 (EEDDIVEEESE). Residues 182–219 (DSQDWTGCLLSQSRSRQPLVLGDNSFADLVKQWMDLPE) are inka box.

The protein belongs to the INKA family.

The protein localises to the nucleus. In terms of biological role, inhibitor of the serine/threonine-protein kinase pak4/pak5. Acts by binding pak4/pak5 in a substrate-like manner, inhibiting the protein kinase activity. The chain is PAK4-inhibitor inka2 from Xenopus laevis (African clawed frog).